The chain runs to 299 residues: Taste receptor type 2 member 4 (299 aa).

Topologically, residues 1 to 9 are extracellular; it reads MLRLFYFSA. A helical transmembrane segment spans residues 10-30; it reads IIASVILNFVGIIMNLFITVV. The Cytoplasmic segment spans residues 31 to 46; the sequence is NCKTWVKSHRISSSDR. A helical transmembrane segment spans residues 47–67; it reads ILFSLGITRFLMLGLFLVNTI. Residues 68 to 81 lie on the Extracellular side of the membrane; it reads YFVSSNTERSVYLS. A helical transmembrane segment spans residues 82-102; that stretch reads AFFVLCFMFLDSSSLWFVTLL. The Cytoplasmic portion of the chain corresponds to 103-131; the sequence is NILYCVKITNFQHSVFLLLKRNISPKIPR. A helical transmembrane segment spans residues 132 to 152; the sequence is LLLACVLISAFTTCLYITLSQ. At 153-172 the chain is on the extracellular side; the sequence is ASPFPELVTTRNNTSFNINE. N-linked (GlcNAc...) asparagine glycans are attached at residues Asn-164 and Asn-165. Residues 173-193 form a helical membrane-spanning segment; the sequence is GILSLVVSLVLSSSLQFIINV. Residues 194–230 are Cytoplasmic-facing; sequence TSASLLIHSLRRHIQKMQKNATGFWNPQTEAHVGAMK. The chain crosses the membrane as a helical span at residues 231–251; that stretch reads LMVYFLILYIPYSVATLVQYL. Residues 252–262 lie on the Extracellular side of the membrane; sequence PFYAGMDMGTK. A helical membrane pass occupies residues 263–283; it reads SICLIFATLYSPGHSVLIIIT. Residues 284-299 lie on the Cytoplasmic side of the membrane; sequence HPKLKTTAKKILCFKK.

The protein belongs to the G-protein coupled receptor T2R family.

The protein resides in the membrane. It is found in the cell projection. Its subcellular location is the cilium membrane. In terms of biological role, gustducin-coupled receptor implicated in the perception of bitter compounds in the oral cavity and the gastrointestinal tract. Signals through PLCB2 and the calcium-regulated cation channel TRPM5. In airway epithelial cells, binding of denatonium increases the intracellular calcium ion concentration and stimulates ciliary beat frequency. The polypeptide is Taste receptor type 2 member 4 (TAS2R4) (Pan paniscus (Pygmy chimpanzee)).